The primary structure comprises 163 residues: ATP synthase subunit b', chloroplastic (163 aa).

The chain crosses the membrane as a helical span at residues 26–46 (ATLPLMALQFILLTVILTFVF).

It belongs to the ATPase B chain family. F-type ATPases have 2 components, F(1) - the catalytic core - and F(0) - the membrane proton channel. F(1) has five subunits: alpha(3), beta(3), gamma(1), delta(1), epsilon(1). F(0) has four main subunits: a(1), b(1), b'(1) and c(10-14). The alpha and beta chains form an alternating ring which encloses part of the gamma chain. F(1) is attached to F(0) by a central stalk formed by the gamma and epsilon chains, while a peripheral stalk is formed by the delta, b and b' chains.

The protein resides in the plastid. The protein localises to the chloroplast thylakoid membrane. Its function is as follows. F(1)F(0) ATP synthase produces ATP from ADP in the presence of a proton or sodium gradient. F-type ATPases consist of two structural domains, F(1) containing the extramembraneous catalytic core and F(0) containing the membrane proton channel, linked together by a central stalk and a peripheral stalk. During catalysis, ATP synthesis in the catalytic domain of F(1) is coupled via a rotary mechanism of the central stalk subunits to proton translocation. Component of the F(0) channel, it forms part of the peripheral stalk, linking F(1) to F(0). The b'-subunit is a diverged and duplicated form of b found in plants and photosynthetic bacteria. This chain is ATP synthase subunit b', chloroplastic, found in Ochrosphaera neapolitana.